Consider the following 106-residue polypeptide: Small ribosomal subunit protein bS16 (106 aa).

It belongs to the bacterial ribosomal protein bS16 family.

This Wolbachia sp. subsp. Brugia malayi (strain TRS) protein is Small ribosomal subunit protein bS16.